A 336-amino-acid chain; its full sequence is Fructose-1,6-bisphosphatase class 1 (336 aa).

Mg(2+)-binding residues include glutamate 90, aspartate 112, leucine 114, and aspartate 115. Substrate-binding positions include 115–118, asparagine 211, and lysine 277; that span reads DGSS. Residue glutamate 283 coordinates Mg(2+).

It belongs to the FBPase class 1 family. Homotetramer. Mg(2+) serves as cofactor.

It is found in the cytoplasm. The catalysed reaction is beta-D-fructose 1,6-bisphosphate + H2O = beta-D-fructose 6-phosphate + phosphate. The protein operates within carbohydrate biosynthesis; gluconeogenesis. The protein is Fructose-1,6-bisphosphatase class 1 of Pseudomonas aeruginosa (strain UCBPP-PA14).